Here is a 352-residue protein sequence, read N- to C-terminus: Putative GATA transcription factor 22 (352 aa).

The disordered stretch occupies residues 27–53 (SLHHHLQQQQQQQQHFHHQASSNPSSL). Low complexity predominate over residues 33 to 53 (QQQQQQQQHFHHQASSNPSSL). A Nuclear localization signal motif is present at residues 112–119 (PKKETRLK). The tract at residues 163–189 (AIITTSDSSKQHTNNDQSSNLSNSERQ) is disordered. Over residues 165–189 (ITTSDSSKQHTNNDQSSNLSNSERQ) the composition is skewed to polar residues. A GATA-type zinc finger spans residues 195–249 (DCVIRICSDCNTTKTPLWRSGPRGPKSLCNACGIRQRKARRAAMATATATAVSGV).

The protein belongs to the type IV zinc-finger family. Class B subfamily. As to quaternary structure, forms heterodimers with GATA18. As to expression, expressed predominantly in leaves, and barely in stems, flowers and siliques.

The protein localises to the nucleus. Its function is as follows. Transcriptional regulator that specifically binds 5'-GATA-3' or 5'-GAT-3' motifs within gene promoters. Involved in the modulation of chloroplast development, growth and division in a cytokinin-dependent manner. Repressor of the gibberellic acid (GA) signaling pathway that regulates flowering and modulates greening, in a SOC1-dependent manner. Prevents the accumulation of SOC1 during flowering. Promotes chlorophyll biosynthesis throughout the plant, by regulating chlorophyll biosynthetic genes (e.g. HEMA1 and GUN4) and chloroplast localized glutamate synthase (e.g. GLU1). Involved in the regulation of sugar-sensing genes (e.g. HXK1, HXK2, STP13 and PLT6). Regulator of germination, senescence, elongation growth and flowering time. Influences also leaf starch content. The protein is Putative GATA transcription factor 22 of Arabidopsis thaliana (Mouse-ear cress).